A 96-amino-acid polypeptide reads, in one-letter code: UPF0213 protein BCE_0033 (96 aa).

Residues 4 to 79 (NKHCFYVVEC…KQLNRKQKEE (76 aa)) enclose the GIY-YIG domain.

This sequence belongs to the UPF0213 family.

The protein is UPF0213 protein BCE_0033 of Bacillus cereus (strain ATCC 10987 / NRS 248).